The sequence spans 236 residues: Ribonuclease HII (236 aa).

An RNase H type-2 domain is found at 27–219 (RILCGVDEAG…VRRALDGAPP (193 aa)). Positions 33, 34, and 128 each coordinate a divalent metal cation. Residues 212 to 236 (RALDGAPPPAGDAVPQTDAKTAWAD) are disordered.

This sequence belongs to the RNase HII family. Mn(2+) is required as a cofactor. Requires Mg(2+) as cofactor.

The protein localises to the cytoplasm. It carries out the reaction Endonucleolytic cleavage to 5'-phosphomonoester.. Endonuclease that specifically degrades the RNA of RNA-DNA hybrids. This Ralstonia nicotianae (strain ATCC BAA-1114 / GMI1000) (Ralstonia solanacearum) protein is Ribonuclease HII.